Consider the following 429-residue polypeptide: D-amino acid dehydrogenase (429 aa).

3 to 17 (VLILGSGVIGVTSAW) lines the FAD pocket.

The protein belongs to the DadA oxidoreductase family. FAD serves as cofactor.

It catalyses the reaction a D-alpha-amino acid + A + H2O = a 2-oxocarboxylate + AH2 + NH4(+). Oxidative deamination of D-amino acids. This Xanthomonas axonopodis pv. citri (strain 306) protein is D-amino acid dehydrogenase.